Consider the following 230-residue polypeptide: Aquaporin Z (230 aa).

2 helical membrane-spanning segments follow: residues 9-29 (AELI…VLAA) and 35-55 (IGVL…AFAI). The short motif at 64–66 (NPA) is the NPA 1 element. The next 3 membrane-spanning stretches (helical) occupy residues 83–103 (LPYV…IYLI), 131–151 (LGAG…VIMG), and 160–180 (GFAP…SIPV). The NPA 2 motif lies at 186-188 (NPA). A helical transmembrane segment spans residues 194-214 (ALFVGGWALQQLWLFWVAPLI).

Belongs to the MIP/aquaporin (TC 1.A.8) family. In terms of assembly, homotetramer.

It localises to the cell inner membrane. It catalyses the reaction H2O(in) = H2O(out). Functionally, channel that permits osmotically driven movement of water in both directions. It is involved in the osmoregulation and in the maintenance of cell turgor during volume expansion in rapidly growing cells. It mediates rapid entry or exit of water in response to abrupt changes in osmolarity. This is Aquaporin Z from Pseudomonas putida (strain ATCC 47054 / DSM 6125 / CFBP 8728 / NCIMB 11950 / KT2440).